A 303-amino-acid polypeptide reads, in one-letter code: Biphenyl-2,3-diol 1,2-dioxygenase (303 aa).

VOC domains are found at residues 5-119 and 143-264; these read SLGY…IYYG and GLGH…YGWS. Fe cation contacts are provided by histidine 146, histidine 210, and glutamate 260. The tract at residues 283–303 is disordered; that stretch reads WGHKSVRDKALRATKHEQQPE. Positions 287–303 are enriched in basic and acidic residues; the sequence is SVRDKALRATKHEQQPE.

This sequence belongs to the extradiol ring-cleavage dioxygenase family. In terms of assembly, homooctamer. It depends on Fe(2+) as a cofactor.

The enzyme catalyses biphenyl-2,3-diol + O2 = 2-hydroxy-6-oxo-6-phenylhexa-2,4-dienoate + H(+). The protein operates within xenobiotic degradation; biphenyl degradation; 2-hydroxy-2,4-pentadienoate and benzoate from biphenyl: step 3/4. The polypeptide is Biphenyl-2,3-diol 1,2-dioxygenase (bphC) (Metapseudomonas furukawaii (Pseudomonas furukawaii)).